The following is a 546-amino-acid chain: Phosphomethylpyrimidine synthase (546 aa).

Residues 1–19 (MSTPSSRSQAPETVTTGPI) are compositionally biased toward polar residues. Residues 1–20 (MSTPSSRSQAPETVTTGPIQ) are disordered. Residues asparagine 146, methionine 175, tyrosine 204, histidine 240, 260-262 (SRG), 301-304 (DGLR), and glutamate 340 each bind substrate. Position 344 (histidine 344) interacts with Zn(2+). Residue tyrosine 367 coordinates substrate. Histidine 408 contacts Zn(2+). Residues cysteine 488, cysteine 491, and cysteine 496 each coordinate [4Fe-4S] cluster.

The protein belongs to the ThiC family. [4Fe-4S] cluster serves as cofactor.

It carries out the reaction 5-amino-1-(5-phospho-beta-D-ribosyl)imidazole + S-adenosyl-L-methionine = 4-amino-2-methyl-5-(phosphooxymethyl)pyrimidine + CO + 5'-deoxyadenosine + formate + L-methionine + 3 H(+). It participates in cofactor biosynthesis; thiamine diphosphate biosynthesis. Its function is as follows. Catalyzes the synthesis of the hydroxymethylpyrimidine phosphate (HMP-P) moiety of thiamine from aminoimidazole ribotide (AIR) in a radical S-adenosyl-L-methionine (SAM)-dependent reaction. The protein is Phosphomethylpyrimidine synthase of Mycobacteroides abscessus (strain ATCC 19977 / DSM 44196 / CCUG 20993 / CIP 104536 / JCM 13569 / NCTC 13031 / TMC 1543 / L948) (Mycobacterium abscessus).